The sequence spans 338 residues: tRNA N6-adenosine threonylcarbamoyltransferase (338 aa).

Fe cation is bound by residues histidine 110, histidine 114, and tyrosine 131. Substrate contacts are provided by residues tyrosine 131 to glycine 135, aspartate 163, aspartate 184, and asparagine 268. Aspartate 296 is a Fe cation binding site.

It belongs to the KAE1 / TsaD family. It depends on Fe(2+) as a cofactor.

It localises to the cytoplasm. It catalyses the reaction L-threonylcarbamoyladenylate + adenosine(37) in tRNA = N(6)-L-threonylcarbamoyladenosine(37) in tRNA + AMP + H(+). Functionally, required for the formation of a threonylcarbamoyl group on adenosine at position 37 (t(6)A37) in tRNAs that read codons beginning with adenine. Is probably involved in the transfer of the threonylcarbamoyl moiety of threonylcarbamoyl-AMP (TC-AMP) to the N6 group of A37. The sequence is that of tRNA N6-adenosine threonylcarbamoyltransferase from Staphylothermus marinus (strain ATCC 43588 / DSM 3639 / JCM 9404 / F1).